We begin with the raw amino-acid sequence, 203 residues long: MELKQSLSVHLEAEKPLRRYGAVEETAWKAEGLGSQLDIISMAETSMMPEEIELEMAKIQRLREVLVRRESELRFMMDDIQLCKDIMNLKQELQNLVAIPEKEKTKLQKQREDELIQKIHRLVQKRDFLVDDAEVERLREQEEDKEMADFLRIKLKPLDKVTKSSASSRAEKKAEPPPSKPTVAKTGLALIKDCCGATQCNIM.

Positions 3 to 149 constitute a bMERB domain; that stretch reads LKQSLSVHLE…EQEEDKEMAD (147 aa). The tract at residues 160–186 is disordered; the sequence is KVTKSSASSRAEKKAEPPPSKPTVAKT.

The polypeptide is bMERB domain-containing protein 1 (Bmerb1) (Rattus norvegicus (Rat)).